A 338-amino-acid chain; its full sequence is Lipoate-protein ligase A (338 aa).

A BPL/LPL catalytic domain is found at P29–V216. ATP-binding positions include R71, G76 to F79, and K134. K134 serves as a coordination point for (R)-lipoate.

This sequence belongs to the LplA family. As to quaternary structure, monomer.

The protein localises to the cytoplasm. It catalyses the reaction L-lysyl-[lipoyl-carrier protein] + (R)-lipoate + ATP = N(6)-[(R)-lipoyl]-L-lysyl-[lipoyl-carrier protein] + AMP + diphosphate + H(+). Its pathway is protein modification; protein lipoylation via exogenous pathway; protein N(6)-(lipoyl)lysine from lipoate: step 1/2. It participates in protein modification; protein lipoylation via exogenous pathway; protein N(6)-(lipoyl)lysine from lipoate: step 2/2. Catalyzes both the ATP-dependent activation of exogenously supplied lipoate to lipoyl-AMP and the transfer of the activated lipoyl onto the lipoyl domains of lipoate-dependent enzymes. The sequence is that of Lipoate-protein ligase A from Escherichia coli O157:H7.